Reading from the N-terminus, the 89-residue chain is Venom peptide BmKAPI (89 aa).

Positions 1-22 (MKFVFASFALFVIFLCFSQSLS) are cleaved as a signal peptide. 5 cysteine pairs are disulfide-bonded: Cys-28/Cys-66, Cys-37/Cys-62, Cys-41/Cys-55, Cys-46/Cys-86, and Cys-68/Cys-80. The TIL domain maps to 28–86 (CRDNEVFDNCISNCGPPRCSNILNTYPCTNLGPLCTPGCKCKDGRVYDNQGRCVLQTEC).

Belongs to the serine protease inhibitor-like (TIL domain-containing) family. In terms of tissue distribution, expressed by the venom gland.

The protein resides in the secreted. Its function is as follows. Serine protease inhibitor. This chain is Venom peptide BmKAPI, found in Olivierus martensii (Manchurian scorpion).